A 187-amino-acid chain; its full sequence is Ribose 1,5-bisphosphate phosphokinase PhnN (187 aa).

9–16 (GPSGSGKD) is a binding site for ATP.

Belongs to the ribose 1,5-bisphosphokinase family.

The enzyme catalyses alpha-D-ribose 1,5-bisphosphate + ATP = 5-phospho-alpha-D-ribose 1-diphosphate + ADP. It participates in metabolic intermediate biosynthesis; 5-phospho-alpha-D-ribose 1-diphosphate biosynthesis; 5-phospho-alpha-D-ribose 1-diphosphate from D-ribose 5-phosphate (route II): step 3/3. In terms of biological role, catalyzes the phosphorylation of ribose 1,5-bisphosphate to 5-phospho-D-ribosyl alpha-1-diphosphate (PRPP). The sequence is that of Ribose 1,5-bisphosphate phosphokinase PhnN from Desulfomicrobium baculatum (strain DSM 4028 / VKM B-1378 / X) (Desulfovibrio baculatus).